The sequence spans 98 residues: Large ribosomal subunit protein bL28 (98 aa).

This sequence belongs to the bacterial ribosomal protein bL28 family.

The sequence is that of Large ribosomal subunit protein bL28 from Phenylobacterium zucineum (strain HLK1).